The sequence spans 139 residues: ATP synthase epsilon chain (139 aa).

The protein belongs to the ATPase epsilon chain family. In terms of assembly, F-type ATPases have 2 components, CF(1) - the catalytic core - and CF(0) - the membrane proton channel. CF(1) has five subunits: alpha(3), beta(3), gamma(1), delta(1), epsilon(1). CF(0) has three main subunits: a, b and c.

Its subcellular location is the cell inner membrane. In terms of biological role, produces ATP from ADP in the presence of a proton gradient across the membrane. The chain is ATP synthase epsilon chain from Actinobacillus pleuropneumoniae serotype 7 (strain AP76).